Consider the following 143-residue polypeptide: Flagellar assembly factor FliW (143 aa).

This sequence belongs to the FliW family. As to quaternary structure, interacts with translational regulator CsrA and flagellin(s).

Its subcellular location is the cytoplasm. Its function is as follows. Acts as an anti-CsrA protein, binds CsrA and prevents it from repressing translation of its target genes, one of which is flagellin. Binds to flagellin and participates in the assembly of the flagellum. The sequence is that of Flagellar assembly factor FliW from Clostridium botulinum (strain Langeland / NCTC 10281 / Type F).